Consider the following 335-residue polypeptide: tRNA N6-adenosine threonylcarbamoyltransferase (335 aa).

Fe cation-binding residues include histidine 111 and histidine 115. Substrate-binding positions include 133–137 (IISGG), aspartate 166, glycine 179, aspartate 183, and asparagine 268. Aspartate 296 provides a ligand contact to Fe cation.

It belongs to the KAE1 / TsaD family. The cofactor is Fe(2+).

The protein localises to the cytoplasm. The enzyme catalyses L-threonylcarbamoyladenylate + adenosine(37) in tRNA = N(6)-L-threonylcarbamoyladenosine(37) in tRNA + AMP + H(+). Required for the formation of a threonylcarbamoyl group on adenosine at position 37 (t(6)A37) in tRNAs that read codons beginning with adenine. Is involved in the transfer of the threonylcarbamoyl moiety of threonylcarbamoyl-AMP (TC-AMP) to the N6 group of A37, together with TsaE and TsaB. TsaD likely plays a direct catalytic role in this reaction. This is tRNA N6-adenosine threonylcarbamoyltransferase from Aquifex aeolicus (strain VF5).